Here is a 128-residue protein sequence, read N- to C-terminus: MDLELLQDLSKFNFPTPIKIRSKTSKTKKDEGDDDEDDLRCSTPTSQEHKIPAVVDSPPPPPRKPRPPPSAPSATAALMIRSCKRKLLVSTCEIIMNREEIDRFFSSVYNETSTTAKRRRSYPYCSRR.

Positions 17-74 (PIKIRSKTSKTKKDEGDDDEDDLRCSTPTSQEHKIPAVVDSPPPPPRKPRPPPSAPSA) are disordered. Over residues 57 to 71 (SPPPPPRKPRPPPSA) the composition is skewed to pro residues.

As to quaternary structure, interacts with CDKB1-1. Interacts with CPR5. In terms of tissue distribution, expressed in roots, leaves, stems, siliques and flowers. Expressed in the root elongation zone.

Its subcellular location is the nucleus. Functionally, probable cyclin-dependent protein kinase (CDK) inhibitor that functions as a repressor of mitosis in the endoreduplication cell cycle. Cooperates with SIM and SMR2 to promote endoreplication during leaf development. Specifically regulates endoreduplication in epidermal pavement cells to produce the cell size pattern. Is necessary for giant cell formation. Positive regulator of effector-triggered immunity (ETI). The protein is Cyclin-dependent protein kinase inhibitor SMR1 of Arabidopsis thaliana (Mouse-ear cress).